The chain runs to 484 residues: Ribonuclease Y (484 aa).

A helical transmembrane segment spans residues 18–38 (FFAFLFLIIIAFNLCLFAYLY). The 69-residue stretch at 166-234 (SPSFLISESD…LTVRNILMND (69 aa)) folds into the KH domain. The HD domain occupies 293–385 (VLSHSLETAF…TQIADKLSAA (93 aa)).

It belongs to the RNase Y family.

It localises to the cell membrane. Endoribonuclease that initiates mRNA decay. The sequence is that of Ribonuclease Y from Mycoplasma genitalium (strain ATCC 33530 / DSM 19775 / NCTC 10195 / G37) (Mycoplasmoides genitalium).